The chain runs to 238 residues: Pyridoxine 5'-phosphate synthase (238 aa).

Residue Asn-9 participates in 3-amino-2-oxopropyl phosphate binding. A 1-deoxy-D-xylulose 5-phosphate-binding site is contributed by 11-12 (DH). Arg-20 lines the 3-amino-2-oxopropyl phosphate pocket. His-45 serves as the catalytic Proton acceptor. Arg-47 and His-52 together coordinate 1-deoxy-D-xylulose 5-phosphate. The active-site Proton acceptor is Glu-72. Thr-102 is a binding site for 1-deoxy-D-xylulose 5-phosphate. The active-site Proton donor is His-189. Residues Gly-190 and 211-212 (GH) each bind 3-amino-2-oxopropyl phosphate.

It belongs to the PNP synthase family. Homooctamer; tetramer of dimers.

The protein resides in the cytoplasm. The catalysed reaction is 3-amino-2-oxopropyl phosphate + 1-deoxy-D-xylulose 5-phosphate = pyridoxine 5'-phosphate + phosphate + 2 H2O + H(+). It functions in the pathway cofactor biosynthesis; pyridoxine 5'-phosphate biosynthesis; pyridoxine 5'-phosphate from D-erythrose 4-phosphate: step 5/5. Its function is as follows. Catalyzes the complicated ring closure reaction between the two acyclic compounds 1-deoxy-D-xylulose-5-phosphate (DXP) and 3-amino-2-oxopropyl phosphate (1-amino-acetone-3-phosphate or AAP) to form pyridoxine 5'-phosphate (PNP) and inorganic phosphate. The polypeptide is Pyridoxine 5'-phosphate synthase (Ehrlichia canis (strain Jake)).